A 295-amino-acid polypeptide reads, in one-letter code: Sulfotransferase 1A1 (295 aa).

Residue 48 to 53 (KSGTTW) coordinates 3'-phosphoadenylyl sulfate. 106-108 (KTH) lines the substrate pocket. Histidine 108 (proton acceptor) is an active-site residue. 3'-phosphoadenylyl sulfate-binding positions include arginine 130, serine 138, tyrosine 193, 227-232 (TSFKEM), and 255-259 (FMRKG). Serine 138 is subject to Phosphoserine.

This sequence belongs to the sulfotransferase 1 family. Homodimer.

Its subcellular location is the cytoplasm. It carries out the reaction a phenol + 3'-phosphoadenylyl sulfate = an aryl sulfate + adenosine 3',5'-bisphosphate + H(+). It catalyses the reaction 17beta-estradiol + 3'-phosphoadenylyl sulfate = 17beta-estradiol 3-sulfate + adenosine 3',5'-bisphosphate + H(+). The enzyme catalyses 4-ethylphenol + 3'-phosphoadenylyl sulfate = 4-ethylphenyl sulfate + adenosine 3',5'-bisphosphate + H(+). The catalysed reaction is 4-nitrophenol + 3'-phosphoadenylyl sulfate = 4-nitrophenyl sulfate + adenosine 3',5'-bisphosphate. It carries out the reaction dopamine + 3'-phosphoadenylyl sulfate = dopamine 3-O-sulfate + adenosine 3',5'-bisphosphate + H(+). It catalyses the reaction dopamine + 3'-phosphoadenylyl sulfate = dopamine 4-O-sulfate + adenosine 3',5'-bisphosphate + H(+). The enzyme catalyses 3,3',5-triiodo-L-thyronine + 3'-phosphoadenylyl sulfate = 3,3',5-triiodo-L-thyronine sulfate + adenosine 3',5'-bisphosphate + H(+). The catalysed reaction is 3,3',5'-triiodo-L-thyronine + 3'-phosphoadenylyl sulfate = 3,3',5'-triiodo-L-thyronine sulfate + adenosine 3',5'-bisphosphate + H(+). It carries out the reaction 3,3'-diiodo-L-thyronine + 3'-phosphoadenylyl sulfate = 3,3'-diiodo-L-thyronine sulfate + adenosine 3',5'-bisphosphate + H(+). It catalyses the reaction L-thyroxine + 3'-phosphoadenylyl sulfate = L-thyroxine sulfate + adenosine 3',5'-bisphosphate + H(+). Its function is as follows. Sulfotransferase that utilizes 3'-phospho-5'-adenylyl sulfate (PAPS) as sulfonate donor to catalyze the sulfate conjugation of a wide variety of acceptor molecules bearing a hydroxyl or an amine group. Sulfonation increases the water solubility of most compounds, and therefore their renal excretion, but it can also result in bioactivation to form active metabolites. Displays broad substrate specificity for small phenolic compounds. Plays an important role in the sulfonation of endogenous molecules such as steroid hormones. Mediates also the metabolic activation of carcinogenic N-hydroxyarylamines leading to highly reactive intermediates capable of forming DNA adducts, potentially resulting in mutagenesis. May play a role in gut microbiota-host metabolic interaction. O-sulfonates 4-ethylphenol (4-EP), a dietary tyrosine-derived metabolite produced by gut bacteria. The product 4-EPS crosses the blood-brain barrier and may negatively regulate oligodendrocyte maturation and myelination, affecting the functional connectivity of different brain regions associated with the limbic system. Catalyzes the sulfate conjugation of dopamine. Catalyzes the sulfation of T4 (L-thyroxine/3,5,3',5'-tetraiodothyronine), T3 (3,5,3'-triiodothyronine), rT3 (3,3',5'-triiodothyronine) and 3,3'-T2 (3,3'-diiodothyronine), with a substrate preference of 3,3'-T2 &gt; rT3 &gt; T3 &gt; T4. In Macaca fascicularis (Crab-eating macaque), this protein is Sulfotransferase 1A1 (SULT1A1).